We begin with the raw amino-acid sequence, 235 residues long: Ribonuclease S-2 (235 aa).

The signal sequence occupies residues 1-31 (MATVQKSQHSHFFLLVGCIVHLSNFCSTTTA). Gln41 contributes to the RNA binding site. Cys47 and Cys54 form a disulfide bridge. His66 provides a ligand contact to RNA. His66 acts as the Proton donor in catalysis. Residue Asn72 is glycosylated (N-linked (GlcNAc...) asparagine). 3 disulfides stabilise this stretch: Cys80/Cys129, Cys189/Cys217, and Cys200/Cys211. RNA is bound by residues 105–106 (DL), Arg108, and Phe118. Gln122 is a catalytic residue. 125–126 (KH) lines the RNA pocket. The active-site Proton acceptor is His126.

Belongs to the RNase T2 family.

Its subcellular location is the secreted. The protein localises to the extracellular space. The catalysed reaction is a ribonucleotidyl-ribonucleotide-RNA + H2O = a 3'-end 3'-phospho-ribonucleotide-RNA + a 5'-end dephospho-ribonucleoside-RNA + H(+). Its function is as follows. Self-incompatibility (SI) is the inherited ability of a flowering plant to prevent self-fertilization by discriminating between self and non-self pollen during pollination. In many species, self-incompatibility is controlled by the single, multiallelic locus S. The protein is Ribonuclease S-2 (S2) of Antirrhinum hispanicum (Snapdragon).